A 1076-amino-acid polypeptide reads, in one-letter code: Enhancer of mRNA-decapping protein 4-like protein pdc1 (1076 aa).

Low complexity-rich tracts occupy residues 1–19 (MNEQDLLNSLRRDLNLPNL) and 53–69 (SSLLSLLNAGLNASNQS). 3 disordered regions span residues 1 to 82 (MNEQ…ASHS), 95 to 127 (GAKPSGTASGADVKRSDSESTEATSNERPFNPV), and 139 to 204 (STGP…AEEQ). The span at 70–82 (PSNSGPKYYASHS) shows a compositional bias: polar residues. A compositionally biased stretch (polar residues) spans 153–173 (NDSQDTAFQSSRNMPSDTSVA). Low complexity predominate over residues 174–184 (SPDYSHSQSSS). A compositionally biased stretch (polar residues) spans 185–195 (PIANYQESGNS). WD repeat units lie at residues 292–334 (NSPN…STSE) and 402–441 (DTGISAKEYDFSYDGTVFATVDKDALIKIYTVPTTFPSTP). Disordered stretches follow at residues 666–714 (RHST…SPSS) and 892–934 (TAPD…PAQG). The segment covering 669-688 (TASPSTVNSGFSTPRSQATG) has biased composition (polar residues). A phosphoserine mark is found at serine 671 and serine 673. Threonine 674 carries the post-translational modification Phosphothreonine. Residues 695–706 (DKGERFETKDKS) are compositionally biased toward basic and acidic residues. An interaction with dcp2 region spans residues 789–1076 (MQVALKEEIA…ISEISVASSN (288 aa)). Residue serine 1075 is modified to Phosphoserine.

This sequence belongs to the WD repeat EDC4 family. In terms of assembly, interacts with dcp2; via C-terminus.

Its subcellular location is the cytoplasm. The protein localises to the P-body. Its function is as follows. Involved in P-body formation. Acts as a functional homolog of human EDC4, which plays a role in mRNA decapping in the process of mRNA degradation. Enhances the decapping activity of dcp2. Together with edc3, acts as a scaffolding protein sufficient for the phase transition of the components of the 5' to 3' mRNA degradation machinery to form P-bodies. Intermolecular interactions between the edc3 Sm domain and at least 10 helical leucine-rich motifs in dcp2 and pdc1 build the core of the interaction network of this spontaneous clustering process. The sequence is that of Enhancer of mRNA-decapping protein 4-like protein pdc1 from Schizosaccharomyces pombe (strain 972 / ATCC 24843) (Fission yeast).